A 195-amino-acid polypeptide reads, in one-letter code: Glutamyl-tRNA(Gln) amidotransferase subunit C, mitochondrial (195 aa).

The transit peptide at 1 to 18 (MNLSTIGFQVIFKQRLRC) directs the protein to the mitochondrion.

Belongs to the GatC family. Subunit of the heterotrimeric GatCAB amidotransferase (AdT) complex, composed of A, B and C subunits.

It is found in the mitochondrion. The catalysed reaction is L-glutamyl-tRNA(Gln) + L-glutamine + ATP + H2O = L-glutaminyl-tRNA(Gln) + L-glutamate + ADP + phosphate + H(+). Its function is as follows. Allows the formation of correctly charged Gln-tRNA(Gln) through the transamidation of misacylated Glu-tRNA(Gln) in the mitochondria. The reaction takes place in the presence of glutamine and ATP through an activated gamma-phospho-Glu-tRNA(Gln). This Brugia malayi (Filarial nematode worm) protein is Glutamyl-tRNA(Gln) amidotransferase subunit C, mitochondrial.